A 64-amino-acid chain; its full sequence is Large ribosomal subunit protein eL37 (64 aa).

The Zn(2+) site is built by Cys20, Cys23, Cys35, and Cys38. The segment at 20–38 (CRRCGRRAYHVRKKACAAC) adopts a C4-type zinc-finger fold.

It belongs to the eukaryotic ribosomal protein eL37 family. It depends on Zn(2+) as a cofactor.

Binds to the 23S rRNA. In Methanococcus vannielii (strain ATCC 35089 / DSM 1224 / JCM 13029 / OCM 148 / SB), this protein is Large ribosomal subunit protein eL37.